The primary structure comprises 160 residues: Lymphocyte antigen 96 (160 aa).

An N-terminal signal peptide occupies residues 1–16 (MLPFILFSTLLPLIFT). Cystine bridges form between Cys25-Cys51, Cys37-Cys148, and Cys95-Cys105. Asn26, Asn77, and Asn101 each carry an N-linked (GlcNAc...) asparagine glycan. An interaction with lipopolysaccharide region spans residues 119–123 (FSFKG). The N-linked (GlcNAc...) asparagine glycan is linked to Asn150.

As to quaternary structure, heterogeneous homomer formed from homodimers; disulfide-linked. Belongs to the lipopolysaccharide (LPS) receptor, a multi-protein complex containing at least CD14, LY96 and TLR4. Binds to the extracellular domains of TLR2 and TLR4. Ligand binding induces interaction with TLR4 and oligomerization of the complex. In terms of processing, N-glycosylated.

The protein resides in the secreted. Its subcellular location is the extracellular space. In terms of biological role, binds bacterial lipopolysaccharide (LPS). Cooperates with TLR4 in the innate immune response to bacterial lipopolysaccharide (LPS), and with TLR2 in the response to cell wall components from Gram-positive and Gram-negative bacteria. Enhances TLR4-dependent activation of NF-kappa-B. Cells expressing both LY96 and TLR4, but not TLR4 alone, respond to LPS. This chain is Lymphocyte antigen 96 (LY96), found in Cricetulus griseus (Chinese hamster).